Consider the following 117-residue polypeptide: DNA-directed RNA polymerase II subunit RPB11 (117 aa).

Met1 carries the N-acetylmethionine modification.

The protein belongs to the archaeal Rpo11/eukaryotic RPB11/RPC19 RNA polymerase subunit family. In terms of assembly, component of the RNA polymerase II (Pol II) core complex consisting of 12 subunits: a ten-subunit catalytic core composed of POLR2A/RPB1, POLR2B/RPB2, POLR2C/RPB3, POLR2I/RPB9, POLR2J/RPB11, POLR2E/RPABC1, POLR2F/RPABC2, POLR2H/RPABC3, POLR2K/RPABC4 and POLR2L/RPABC5 and a mobile stalk composed of two subunits POLR2D/RPB4 and POLR2G/RPB7, protruding from the core and functioning primarily in transcription initiation. Part of Pol II(G) complex, in which Pol II core associates with an additional subunit POLR2M; unlike conventional Pol II, Pol II(G) functions as a transcriptional repressor. Part of TBP-based Pol II pre-initiation complex (PIC), in which Pol II core assembles with general transcription factors and other specific initiation factors including GTF2E1, GTF2E2, GTF2F1, GTF2F2, TCEA1, ERCC2, ERCC3, GTF2H2, GTF2H3, GTF2H4, GTF2H5, GTF2A1, GTF2A2, GTF2B and TBP; this large multi-subunit PIC complex mediates DNA unwinding and targets Pol II core to the transcription start site where the first phosphodiester bond forms. Interacts with AATF. Interacts with PTPN6; this interaction promotes the recruitment of RNA pol II to the PCK1 promoter.

It is found in the nucleus. In terms of biological role, core component of RNA polymerase II (Pol II), a DNA-dependent RNA polymerase which synthesizes mRNA precursors and many functional non-coding RNAs using the four ribonucleoside triphosphates as substrates. In Mus musculus (Mouse), this protein is DNA-directed RNA polymerase II subunit RPB11 (Polr2j).